The following is a 280-amino-acid chain: Large ribosomal subunit protein uL2 (280 aa).

Disordered regions lie at residues 1 to 47 (MAIR…NVHG) and 224 to 280 (VVMN…SKKR). Residues 23–33 (EITRSTPEKSL) are compositionally biased toward basic and acidic residues. The segment covering 37 to 47 (LPKKGGRNVHG) has biased composition (basic residues). The span at 258-268 (RNPNRYSNNMI) shows a compositional bias: polar residues. Residues 270–280 (QRRRTNKSKKR) show a composition bias toward basic residues.

This sequence belongs to the universal ribosomal protein uL2 family. As to quaternary structure, part of the 50S ribosomal subunit. Forms a bridge to the 30S subunit in the 70S ribosome.

Functionally, one of the primary rRNA binding proteins. Required for association of the 30S and 50S subunits to form the 70S ribosome, for tRNA binding and peptide bond formation. It has been suggested to have peptidyltransferase activity; this is somewhat controversial. Makes several contacts with the 16S rRNA in the 70S ribosome. The protein is Large ribosomal subunit protein uL2 of Corynebacterium diphtheriae (strain ATCC 700971 / NCTC 13129 / Biotype gravis).